Here is a 288-residue protein sequence, read N- to C-terminus: Shikimate dehydrogenase (NADP(+)) (288 aa).

Shikimate-binding positions include 21–23 (SLS) and threonine 68. The active-site Proton acceptor is lysine 72. Glutamate 84 is an NADP(+) binding site. Shikimate contacts are provided by asparagine 93 and aspartate 108. Residues 132 to 136 (GNGGA) and leucine 230 contribute to the NADP(+) site. Tyrosine 232 provides a ligand contact to shikimate. Glycine 253 contacts NADP(+).

It belongs to the shikimate dehydrogenase family. As to quaternary structure, homodimer.

The enzyme catalyses shikimate + NADP(+) = 3-dehydroshikimate + NADPH + H(+). It functions in the pathway metabolic intermediate biosynthesis; chorismate biosynthesis; chorismate from D-erythrose 4-phosphate and phosphoenolpyruvate: step 4/7. Involved in the biosynthesis of the chorismate, which leads to the biosynthesis of aromatic amino acids. Catalyzes the reversible NADPH linked reduction of 3-dehydroshikimate (DHSA) to yield shikimate (SA). In Gloeothece citriformis (strain PCC 7424) (Cyanothece sp. (strain PCC 7424)), this protein is Shikimate dehydrogenase (NADP(+)).